The sequence spans 252 residues: Thiazole synthase (252 aa).

The active-site Schiff-base intermediate with DXP is Lys98. Residues Gly159, 185-186 (AG), and 207-208 (AS) each bind 1-deoxy-D-xylulose 5-phosphate.

Belongs to the ThiG family. Homotetramer. Forms heterodimers with either ThiH or ThiS.

It is found in the cytoplasm. It carries out the reaction [ThiS sulfur-carrier protein]-C-terminal-Gly-aminoethanethioate + 2-iminoacetate + 1-deoxy-D-xylulose 5-phosphate = [ThiS sulfur-carrier protein]-C-terminal Gly-Gly + 2-[(2R,5Z)-2-carboxy-4-methylthiazol-5(2H)-ylidene]ethyl phosphate + 2 H2O + H(+). It functions in the pathway cofactor biosynthesis; thiamine diphosphate biosynthesis. Its function is as follows. Catalyzes the rearrangement of 1-deoxy-D-xylulose 5-phosphate (DXP) to produce the thiazole phosphate moiety of thiamine. Sulfur is provided by the thiocarboxylate moiety of the carrier protein ThiS. In vitro, sulfur can be provided by H(2)S. This Mycobacterium tuberculosis (strain ATCC 25177 / H37Ra) protein is Thiazole synthase.